Consider the following 364-residue polypeptide: MTTPLIEIRQIYKSYGNTPILNNVSLNVNHGEFLTLLGPSGCGKTTLLRLISGFEQPTLGEIFINGQCVNQLPPQKRDVHTVFQSYALFPHLSVFENVAFALRCKKTPNQEIRKRVFDALKLVQLESLAERNVKQLSGGQQQRVAIARAIINRPQVLLLDEPLSSLDYRLRKAMQSELKQLQKTLNMTFIFVTHDQEEALSMSDRIVVFNHGHIEQIGTPKAVYETPANLHVAMFIGEANIFDIQVHTVKDQDIVTNIEGIQLSCKNTGNYQVNEWLHLIVRPEDIRVWSLSEVEKTEGMLPGRIVDIIYKGSTVDLKVELSSGKIINASEFFDEDDDKLEYTLHETVWVQWLPGWEVLLPHEG.

Residues 6-236 (IEIRQIYKSY…PANLHVAMFI (231 aa)) form the ABC transporter domain. Residue 38-45 (GPSGCGKT) participates in ATP binding.

The protein belongs to the ABC transporter superfamily. Spermidine/putrescine importer (TC 3.A.1.11.1) family. As to quaternary structure, the complex is composed of two ATP-binding proteins (PotA), two transmembrane proteins (PotB and PotC) and a solute-binding protein (PotD).

Its subcellular location is the cell inner membrane. The catalysed reaction is ATP + H2O + polyamine-[polyamine-binding protein]Side 1 = ADP + phosphate + polyamineSide 2 + [polyamine-binding protein]Side 1.. Part of the ABC transporter complex PotABCD involved in spermidine/putrescine import. Responsible for energy coupling to the transport system. This Legionella pneumophila (strain Lens) protein is Spermidine/putrescine import ATP-binding protein PotA.